The sequence spans 811 residues: Ribonucleoside-diphosphate reductase large chain (811 aa).

Residues 1-92 (MFVYKRDGRQ…VSNLHKQTEK (92 aa)) enclose the ATP-cone domain. Residues 5 to 6 (KR), 11 to 17 (EKVAFDK), threonine 53, and aspartate 57 contribute to the ATP site. Residues serine 202 and serine 217 each contribute to the GDP site. A disulfide bond links cysteine 218 and cysteine 444. DTTP is bound by residues 226–228 (DSI), lysine 243, arginine 256, and 263–264 (AG). Asparagine 427 lines the GDP pocket. The Proton acceptor role is filled by asparagine 427. Catalysis depends on cysteine 429, which acts as the Cysteine radical intermediate. Residues glutamate 431 and 603 to 606 (TAST) each bind GDP. The active-site Proton acceptor is the glutamate 431.

This sequence belongs to the ribonucleoside diphosphate reductase large chain family. Heterodimer of a large and a small subunit. Interacts with SPD1.

The catalysed reaction is a 2'-deoxyribonucleoside 5'-diphosphate + [thioredoxin]-disulfide + H2O = a ribonucleoside 5'-diphosphate + [thioredoxin]-dithiol. With respect to regulation, under complex allosteric control mediated by deoxynucleoside triphosphates and ATP binding to separate specificity and activation sites on the large subunit. The type of nucleotide bound at the specificity site determines substrate preference. It seems probable that ATP makes the enzyme reduce CDP and UDP, dGTP favors ADP reduction and dTTP favors GDP reduction. Stimulated by ATP and inhibited by dATP binding to the activity site. In terms of biological role, provides the precursors necessary for DNA synthesis. Catalyzes the biosynthesis of deoxyribonucleotides from the corresponding ribonucleotides. In Schizosaccharomyces pombe (strain 972 / ATCC 24843) (Fission yeast), this protein is Ribonucleoside-diphosphate reductase large chain (cdc22).